The sequence spans 245 residues: Epoxyqueuosine reductase QueH (245 aa).

Residues Cys-52, Cys-53, Cys-131, and Cys-134 each contribute to the [4Fe-4S] cluster site. Cys-214 and Cys-216 are joined by a disulfide.

The protein belongs to the QueH family.

It catalyses the reaction epoxyqueuosine(34) in tRNA + AH2 = queuosine(34) in tRNA + A + H2O. The protein operates within tRNA modification; tRNA-queuosine biosynthesis. Catalyzes the conversion of epoxyqueuosine (oQ) to queuosine (Q), which is a hypermodified base found in the wobble positions of tRNA(Asp), tRNA(Asn), tRNA(His) and tRNA(Tyr). In Haemophilus influenzae (strain ATCC 51907 / DSM 11121 / KW20 / Rd), this protein is Epoxyqueuosine reductase QueH.